The sequence spans 374 residues: PqqA peptide cyclase (374 aa).

A Radical SAM core domain is found at 4 to 224; it reads IEPPMGLLAE…ERLKGVMVID (221 aa). 3 residues coordinate [4Fe-4S] cluster: Cys18, Cys22, and Cys25.

The protein belongs to the radical SAM superfamily. PqqE family. As to quaternary structure, interacts with PqqD. The interaction is necessary for activity of PqqE. [4Fe-4S] cluster serves as cofactor.

The enzyme catalyses [PQQ precursor protein] + S-adenosyl-L-methionine = E-Y cross-linked-[PQQ precursor protein] + 5'-deoxyadenosine + L-methionine + H(+). It participates in cofactor biosynthesis; pyrroloquinoline quinone biosynthesis. In terms of biological role, catalyzes the cross-linking of a glutamate residue and a tyrosine residue in the PqqA protein as part of the biosynthesis of pyrroloquinoline quinone (PQQ). This is PqqA peptide cyclase from Granulibacter bethesdensis (strain ATCC BAA-1260 / CGDNIH1).